Here is a 418-residue protein sequence, read N- to C-terminus: Serine hydroxymethyltransferase (418 aa).

Residues Leu121 and Gly125 to Leu127 contribute to the (6S)-5,6,7,8-tetrahydrofolate site. Residue Lys230 is modified to N6-(pyridoxal phosphate)lysine. (6S)-5,6,7,8-tetrahydrofolate-binding positions include Glu246 and Ser355–Phe357.

This sequence belongs to the SHMT family. In terms of assembly, homodimer. Requires pyridoxal 5'-phosphate as cofactor.

It localises to the cytoplasm. It catalyses the reaction (6R)-5,10-methylene-5,6,7,8-tetrahydrofolate + glycine + H2O = (6S)-5,6,7,8-tetrahydrofolate + L-serine. Its pathway is one-carbon metabolism; tetrahydrofolate interconversion. It functions in the pathway amino-acid biosynthesis; glycine biosynthesis; glycine from L-serine: step 1/1. Its function is as follows. Catalyzes the reversible interconversion of serine and glycine with tetrahydrofolate (THF) serving as the one-carbon carrier. This reaction serves as the major source of one-carbon groups required for the biosynthesis of purines, thymidylate, methionine, and other important biomolecules. Also exhibits THF-independent aldolase activity toward beta-hydroxyamino acids, producing glycine and aldehydes, via a retro-aldol mechanism. The polypeptide is Serine hydroxymethyltransferase (Streptococcus pneumoniae (strain Taiwan19F-14)).